Here is a 360-residue protein sequence, read N- to C-terminus: Cinnamyl alcohol dehydrogenase 2 (360 aa).

Residues 23 to 351 (GVLSPFNFSR…KADVKYRFVI (329 aa)) form the Enoyl reductase (ER) domain. Cys50 lines the Zn(2+) pocket. Ser52 provides a ligand contact to an alcohol. Ser52 is an NADP(+) binding site. Residues Asp53, His72, Glu73, Cys103, Cys106, Cys109, Cys117, and Cys166 each contribute to the Zn(2+) site. His72 serves as a coordination point for an alcohol. NADP(+) is bound by residues Leu192, Gly194, Leu195, Ser214, Thr215, Ser216, Lys219, Lys220, Val277, Ala279, Ser301, and Arg348.

This sequence belongs to the zinc-containing alcohol dehydrogenase family. Class-P subfamily. In terms of assembly, homodimer. Zn(2+) is required as a cofactor. Mainly expressed in young roots and, to a lower extent, in stems and leaves.

It localises to the cytoplasm. The catalysed reaction is (E)-cinnamyl alcohol + NADP(+) = (E)-cinnamaldehyde + NADPH + H(+). Its function is as follows. Alcohol dehydrogenase that catalyzes the conversion of (E)-cinnamyl alcohol to (E)-cinnamaldehyde. The chain is Cinnamyl alcohol dehydrogenase 2 from Rauvolfia serpentina (Serpentine wood).